The chain runs to 835 residues: MNKYPPLLTMLIIGIGSNAVAGDYFDPSLLATDIGNNDKLDLSLFSHPGGGVKGEREVSVYINDFFYKNVTLDFENGISGALEPIFPSGFFDNILASPYRSIKEKELISTADFLSLVPYGMVRFDQAIARVDISIPQAYLGRDAQMKSAPESWNQGVPALLIDYRLSGSKNKYNYGSSQNFYANAFLGFNLMGWRLRTTTNYMSYNSKDLYNKGERQGSFNFYNTYLEKDIGYLRSTLRLGELSTRGMILESFNFKGGKIYSNDEMLNDRLRSYTPTVRGIASSQAVVTIKQGGVVILQKNVPPGPFEINDFSLSGYSGDLYVNIKEADGSEHSFIQPFSTLPEMKREGVSGYEISLGHYNNSGATQYYNESPFLYASWSRGYRNGMTLYSETIQSRKYQLLGVGSTLSLGDFGAVSGDASLSRANKYDKIHSGQSYGLKYSKNKVDTGTTVTLATYRYSTKDFYSFNDFVSKNDSVQYVWDNRLKNRITLSLNQSLDDYGSLSLIASQQNYWTSDYVSRSFSLSHSFGWNDIFFSTSFSLDQKEGDNALRNNNKVFGFYSSIPLSKLIGKNESTYSTLSYNVTKINNQVRNTATLAGKVPGSMAQYRFSSGWANTEQSSNKALSVNWDGDLLDGSLGYTSSGKNRITDYSLSGSAILYPWRLAIGSDSVINGAAVVETEFISGIKVRQGGETSLLGTAIVTSMQPYTENRIDLDTQNIPDDLFISNASKKIVPEKGAVVPVKYNLFKGKQIVFSLKRYDGTPLPFGSVVSLVGSDSEITGIIDDAGRVYLAGIPSKGILHGAWGYNKSCEVSFNLNGKPSNNSNEIIEYEGVCK.

An N-terminal signal peptide occupies residues 1–21 (MNKYPPLLTMLIIGIGSNAVA). Cysteines 810 and 834 form a disulfide.

The protein belongs to the fimbrial export usher family.

It localises to the cell outer membrane. In terms of biological role, involved in the export and assembly of the 987P fimbriae subunits across the outer membrane. This Escherichia coli protein is Outer membrane usher protein FasD (fasD).